The primary structure comprises 210 residues: Thymidylate kinase (210 aa).

Position 10 to 17 (glycine 10 to serine 17) interacts with ATP.

Belongs to the thymidylate kinase family.

The catalysed reaction is dTMP + ATP = dTDP + ADP. Phosphorylation of dTMP to form dTDP in both de novo and salvage pathways of dTTP synthesis. The protein is Thymidylate kinase of Pseudomonas fluorescens (strain Pf0-1).